The chain runs to 1447 residues: Inositol 1,4,5-triphosphate receptor associated 2 (1447 aa).

Over 1–1388 (MDVGVTPRRH…RPAVSRGARG (1388 aa)) the chain is Cytoplasmic. Disordered stretches follow at residues 64-96 (VRPDDSDSASSAGMLTPTASPGPGSSCNTPRAP) and 420-439 (LSLTSSEESRAQAAAQRKQM). The segment covering 71 to 92 (SASSAGMLTPTASPGPGSSCNT) has biased composition (polar residues). Coiled-coil stretches lie at residues 354-518 (FCVA…EYSS) and 665-731 (TDWI…DNRE). Over residues 420–436 (LSLTSSEESRAQAAAQR) the composition is skewed to low complexity. Disordered stretches follow at residues 790 to 828 (KQEEEEPTETVSDKEKITAKSEGEGEATYDSGVENEEPQ), 841 to 860 (KKSERESNEAPFVGEGGEQR), 991 to 1132 (PVAE…SPSD), 1267 to 1289 (NERSFGSHSERDDFRNKKQTTSN), and 1355 to 1379 (DEPTLMNSPTPSPTDNAPPSLMEGR). Basic and acidic residues predominate over residues 800-812 (VSDKEKITAKSEG). A compositionally biased stretch (polar residues) spans 1021 to 1035 (KKTVVTSDSNSTGSA). Composition is skewed to basic and acidic residues over residues 1037 to 1049 (SLKDPSEKVKDMT) and 1080 to 1096 (KKEMSSMEVIEEQKAQE). The tract at residues 1076-1265 (RNKLKKEMSS…ELLELRENLT (190 aa)) is necessary for spindle and spindle pole localization. Residues 1110–1119 (TSVSSENASD) are compositionally biased toward polar residues. Residues 1120-1132 (STKDDKNSLSPSD) are compositionally biased toward basic and acidic residues. Over residues 1359–1371 (LMNSPTPSPTDNA) the composition is skewed to polar residues. Residues 1388–1447 (GIWIWVALFVVLAVLLALLASLMLQPAVDAAPVGTGDSWMTIQQLLWPYTGLRHNGQPPV) form a necessary for nuclear membrane localization region. The helical; Anchor for type IV membrane protein transmembrane segment at 1389-1409 (IWIWVALFVVLAVLLALLASL) threads the bilayer. Residues 1410–1447 (MLQPAVDAAPVGTGDSWMTIQQLLWPYTGLRHNGQPPV) lie on the Lumenal side of the membrane.

This sequence belongs to the IRAG2 family.

The protein localises to the endoplasmic reticulum membrane. Its subcellular location is the nucleus envelope. It localises to the cytoplasm. The protein resides in the cytoskeleton. It is found in the microtubule organizing center. The protein localises to the centrosome. Its subcellular location is the spindle pole. It localises to the chromosome. In terms of biological role, a maternally expressed membrane and cytoskeletal linker protein, which is essential for attachment of the centrosome to the male pronucleus. Promotes male and female pronucleus congression and subsequent fusion after fertilization. Congression is mediated by the sperm aster microtubules. The chain is Inositol 1,4,5-triphosphate receptor associated 2 (irag2) from Danio rerio (Zebrafish).